The following is a 359-amino-acid chain: Membrane-bound lytic murein transglycosylase C (359 aa).

Positions 1 to 16 are cleaved as a signal peptide; sequence MKKVLALALIAPLLIS. Cys17 is lipidated: N-palmitoyl cysteine. A lipid anchor (S-diacylglycerol cysteine) is attached at Cys17.

Belongs to the transglycosylase Slt family.

It localises to the cell outer membrane. It catalyses the reaction Exolytic cleavage of the (1-&gt;4)-beta-glycosidic linkage between N-acetylmuramic acid (MurNAc) and N-acetylglucosamine (GlcNAc) residues in peptidoglycan, from either the reducing or the non-reducing ends of the peptidoglycan chains, with concomitant formation of a 1,6-anhydrobond in the MurNAc residue.. In terms of biological role, murein-degrading enzyme. May play a role in recycling of muropeptides during cell elongation and/or cell division. The chain is Membrane-bound lytic murein transglycosylase C from Edwardsiella ictaluri (strain 93-146).